The primary structure comprises 141 residues: ATP synthase epsilon chain (141 aa).

This sequence belongs to the ATPase epsilon chain family. F-type ATPases have 2 components, CF(1) - the catalytic core - and CF(0) - the membrane proton channel. CF(1) has five subunits: alpha(3), beta(3), gamma(1), delta(1), epsilon(1). CF(0) has three main subunits: a, b and c.

The protein localises to the cell membrane. In terms of biological role, produces ATP from ADP in the presence of a proton gradient across the membrane. In Mycoplasma mobile (strain ATCC 43663 / 163K / NCTC 11711) (Mesomycoplasma mobile), this protein is ATP synthase epsilon chain.